We begin with the raw amino-acid sequence, 818 residues long: Elongation factor G, mitochondrial (818 aa).

A mitochondrion-targeting transit peptide spans 1–23; the sequence is MFLGRAASRTCRHSQPLRVAARA. Residues 67-96 form a disordered region; it reads MASTATATKPTEEASSSDQPPAPAHKLTDN. Polar residues predominate over residues 69–85; it reads STATATKPTEEASSSDQ. The 289-residue stretch at 102–390 folds into the tr-type G domain; sequence TFQRNIGISA…GVCEYLPNPS (289 aa). Residues 111–118, 188–192, and 242–245 each bind GTP; these read AHIDSGKT, DTPGH, and NKMD.

The protein belongs to the TRAFAC class translation factor GTPase superfamily. Classic translation factor GTPase family. EF-G/EF-2 subfamily.

The protein resides in the mitochondrion. The protein operates within protein biosynthesis; polypeptide chain elongation. Functionally, mitochondrial GTPase that catalyzes the GTP-dependent ribosomal translocation step during translation elongation. During this step, the ribosome changes from the pre-translocational (PRE) to the post-translocational (POST) state as the newly formed A-site-bound peptidyl-tRNA and P-site-bound deacylated tRNA move to the P and E sites, respectively. Catalyzes the coordinated movement of the two tRNA molecules, the mRNA and conformational changes in the ribosome. The chain is Elongation factor G, mitochondrial from Coprinopsis cinerea (strain Okayama-7 / 130 / ATCC MYA-4618 / FGSC 9003) (Inky cap fungus).